Consider the following 369-residue polypeptide: Septin-5 (369 aa).

The residue at position 13 (T13) is a Phosphothreonine. The region spanning 41-314 is the Septin-type G domain; it reads KGFDFTLMVA…ENYRAHCIQQ (274 aa). The G1 motif stretch occupies residues 51 to 58; the sequence is GESGLGKS. GTP-binding positions include 51–58, T85, and G111; that span reads GESGLGKS. Residues 108 to 111 are G3 motif; it reads DTPG. Omega-N-methylarginine is present on R168. The segment at 189-192 is G4 motif; that stretch reads AKAD. 190–198 contributes to the GTP binding site; it reads KADCLVPSE. Position 225 is a phosphoserine (S225). GTP-binding residues include G248 and R263. Phosphoserine is present on S327. T336 carries the phosphothreonine modification. Residues 338-369 adopt a coiled-coil conformation; that stretch reads DAETEKLIRMKDEELRRMQEMLQRMKQQMQDQ.

It belongs to the TRAFAC class TrmE-Era-EngA-EngB-Septin-like GTPase superfamily. Septin GTPase family. Septins polymerize into heterooligomeric protein complexes that form filaments, and can associate with cellular membranes, actin filaments and microtubules. GTPase activity is required for filament formation. Interacts with SEPTIN2 and SEPTIN5. In platelets, associated with a complex containing STX4. Interacts with PRKN; this interaction leads to SEPTIN5 ubiquitination and degradation. Interacts with DYRK1A. Interacts with STX1A; in the cerebellar cortex. In terms of processing, phosphorylated by DYRK1A. In platelets, phosphorylated in response to thrombin, phorbol-12-myristate-13-acetate and collagen. As to expression, expressed at high levels in the CNS, as well as in heart and platelets (at protein level).

Its subcellular location is the cytoplasm. The protein resides in the cytoskeleton. Its function is as follows. Filament-forming cytoskeletal GTPase. May play a role in cytokinesis (Potential). May play a role in platelet secretion. In Homo sapiens (Human), this protein is Septin-5.